Reading from the N-terminus, the 367-residue chain is Protein NDRG4-B (367 aa).

A compositionally biased stretch (basic and acidic residues) spans 1 to 12 (MSELRFPEEKPL). 2 disordered regions span residues 1-21 (MSEL…TEME) and 333-367 (LTSA…EVSC). A compositionally biased stretch (polar residues) spans 347-367 (CTQSESSDGIGQINHTMEVSC).

The protein belongs to the NDRG family.

The protein localises to the cytoplasm. The protein resides in the cytosol. Functionally, contributes to the maintenance of intracerebral BDNF levels within the normal range. May enhance growth factor-induced ERK1 and ERK2 phosphorylation. May attenuate growth factor-promoted ELK1 phosphorylation in a microtubule-dependent manner. This chain is Protein NDRG4-B (ndrg4-b), found in Xenopus laevis (African clawed frog).